The chain runs to 440 residues: tRNA(Ile)-lysidine synthase (440 aa).

Position 25-30 (25-30 (SGGVDS)) interacts with ATP.

The protein belongs to the tRNA(Ile)-lysidine synthase family.

The protein resides in the cytoplasm. It catalyses the reaction cytidine(34) in tRNA(Ile2) + L-lysine + ATP = lysidine(34) in tRNA(Ile2) + AMP + diphosphate + H(+). Ligates lysine onto the cytidine present at position 34 of the AUA codon-specific tRNA(Ile) that contains the anticodon CAU, in an ATP-dependent manner. Cytidine is converted to lysidine, thus changing the amino acid specificity of the tRNA from methionine to isoleucine. The chain is tRNA(Ile)-lysidine synthase from Vibrio cholerae serotype O1 (strain ATCC 39541 / Classical Ogawa 395 / O395).